A 268-amino-acid chain; its full sequence is Phosphatidylglycerol--prolipoprotein diacylglyceryl transferase (268 aa).

Helical transmembrane passes span 14 to 34 (LGPI…FAGW), 57 to 77 (LTFY…IIFY), 90 to 110 (FFLW…LIAF), and 117 to 137 (IGAN…IGLG). An a 1,2-diacyl-sn-glycero-3-phospho-(1'-sn-glycerol)-binding site is contributed by Arg-140. Transmembrane regions (helical) follow at residues 174–194 (QLFE…LVTI), 200–220 (YLVL…CEFF), and 238–258 (GQIL…AVFI).

This sequence belongs to the Lgt family.

The protein resides in the cell inner membrane. It carries out the reaction L-cysteinyl-[prolipoprotein] + a 1,2-diacyl-sn-glycero-3-phospho-(1'-sn-glycerol) = an S-1,2-diacyl-sn-glyceryl-L-cysteinyl-[prolipoprotein] + sn-glycerol 1-phosphate + H(+). It participates in protein modification; lipoprotein biosynthesis (diacylglyceryl transfer). In terms of biological role, catalyzes the transfer of the diacylglyceryl group from phosphatidylglycerol to the sulfhydryl group of the N-terminal cysteine of a prolipoprotein, the first step in the formation of mature lipoproteins. This is Phosphatidylglycerol--prolipoprotein diacylglyceryl transferase from Francisella tularensis subsp. mediasiatica (strain FSC147).